A 319-amino-acid polypeptide reads, in one-letter code: Taste receptor type 2 member 14 (319 aa).

At 1–7 (MDGVIKS) the chain is on the extracellular side. The helical transmembrane segment at 8 to 28 (IFTFILILEFIIGNLGNSFIV) threads the bilayer. The Cytoplasmic segment spans residues 29–55 (LVNCIDWVKRRKISLVDQLLIALAISR). A helical transmembrane segment spans residues 56 to 76 (ISLVWSIFGSWCVSVVFPALF). Residues 77–87 (ATEKLLRMLTN) are Extracellular-facing. Cholesterol contacts are provided by Thr86 and Trp89. The chain crosses the membrane as a helical span at residues 88–108 (IWTVTNHFSVWLATILGTFYF). Residues 109 to 129 (LKIANFSNSIFLYLKWRVKKV) lie on the Cytoplasmic side of the membrane. Residues 130 to 150 (VLVLLLVTLVLLFLNILLINI) form a helical membrane-spanning segment. At 151–184 (HINASINGYRGNMTCSSASCNFIRFSSAIALTST) the chain is on the extracellular side. N-linked (GlcNAc...) asparagine glycans are attached at residues Asn153 and Asn162. Cholesterol is bound at residue Ala180. A helical transmembrane segment spans residues 185–205 (VFILIPFTLSLATFLLLSFSL). Residues 206 to 232 (WKHRKKMQHTVKGYRDVSTKAHRGVMQ) lie on the Cytoplasmic side of the membrane. A helical membrane pass occupies residues 233 to 253 (TVITFLLLYAVFFLTFFVSIW). The Extracellular segment spans residues 254-261 (ISERLKEN). A helical transmembrane segment spans residues 262–282 (QIIILSEMMGLAYPSGHSCVL). Residues Ile265 and Glu268 each contribute to the cholesterol site. The Cytoplasmic segment spans residues 283 to 317 (ILGNKKLRQASLSVLWWLRYRFKDGELSGHKEFRE).

Belongs to the G-protein coupled receptor T2R family. Core component of the TAS2R14-GNAI1 complex, consisting of TAS2R14, GNAI1, GNB1 and GNG2; within the complex interacts with GNAI1. Core component of the TAS2R14-GNAT3 complex, consisting of TAS2R14, GNAT3, GNB1 and GNG2; within the complex interacts with GNAT3. Core component of the TAS2R14-GNAS2 complex, consisting of TAS2R14, GNAS2, GNB1 and GNG2; within the complex interacts with GNAS2.

The protein localises to the membrane. It carries out the reaction Ca(2+)(in) = Ca(2+)(out). The enzyme catalyses 3',5'-cyclic AMP(in) = 3',5'-cyclic AMP(out). Its activity is regulated as follows. Basal activity is enhanced by binding to bitter tastants, such as flufenamic acid and aristolochic acid. Regulated by cholesterol in a concentration-dependent manner. In terms of biological role, gustducin-linked G-protein coupled receptor that plays a role in the perception of bitterness. The activity of this receptor stimulates GNAT3, activating the gustducin G-protein pathway. Likely plays a role in sensing the chemical composition of the gastrointestinal content and other extra-oral tissues via the inhibitory G-protein pathways. The protein is Taste receptor type 2 member 14 (TAS2R14) of Papio hamadryas (Hamadryas baboon).